The following is a 321-amino-acid chain: MKKMKKLLLLLSASFAFSLQMDFKEVKKFPYIKYVTAWKGTPAETKDVAVPNVYIVVGQKESPEVLTSAAKVAFYLGQWTDGIGLSPKLVKEGKIPKLIISDKEVEKYKDRNLIVIGTNNEIVRELGLKFKEPTLKVVEKDGRKILIVGGKDTKEVVKAASFLADRVISFKVGAYNTFFNWVRVRGMIEHGNYEGAYDMLTDSRGVHACGRNMSLAAPMMAKFPPEVKKVVKKRNKIMYVELPKALKEENKEKAKKLWREAMITCFQCHHGIGIPKMRKFEPLADIHSKHQRIANKYGLSCKDCHYGITEYRGYEEGTTEQ.

A signal peptide spans 1–18 (MKKMKKLLLLLSASFAFS).

This is an uncharacterized protein from Aquifex aeolicus (strain VF5).